We begin with the raw amino-acid sequence, 41 residues long: Large ribosomal subunit protein bL36 (41 aa).

The protein belongs to the bacterial ribosomal protein bL36 family.

This is Large ribosomal subunit protein bL36 from Xylella fastidiosa (strain 9a5c).